Consider the following 334-residue polypeptide: Aspartate carbamoyltransferase catalytic subunit (334 aa).

Positions 70 and 71 each coordinate carbamoyl phosphate. K98 contacts L-aspartate. 3 residues coordinate carbamoyl phosphate: R120, H150, and Q153. The L-aspartate site is built by R183 and R239. Carbamoyl phosphate is bound by residues G280 and P281.

It belongs to the aspartate/ornithine carbamoyltransferase superfamily. ATCase family. Heterododecamer (2C3:3R2) of six catalytic PyrB chains organized as two trimers (C3), and six regulatory PyrI chains organized as three dimers (R2).

It catalyses the reaction carbamoyl phosphate + L-aspartate = N-carbamoyl-L-aspartate + phosphate + H(+). It participates in pyrimidine metabolism; UMP biosynthesis via de novo pathway; (S)-dihydroorotate from bicarbonate: step 2/3. In terms of biological role, catalyzes the condensation of carbamoyl phosphate and aspartate to form carbamoyl aspartate and inorganic phosphate, the committed step in the de novo pyrimidine nucleotide biosynthesis pathway. The sequence is that of Aspartate carbamoyltransferase catalytic subunit from Pseudomonas aeruginosa (strain LESB58).